The primary structure comprises 134 residues: Small ribosomal subunit protein uS8c (134 aa).

This sequence belongs to the universal ribosomal protein uS8 family. As to quaternary structure, part of the 30S ribosomal subunit.

It localises to the plastid. Its subcellular location is the chloroplast. Functionally, one of the primary rRNA binding proteins, it binds directly to 16S rRNA central domain where it helps coordinate assembly of the platform of the 30S subunit. In Gossypium barbadense (Sea Island cotton), this protein is Small ribosomal subunit protein uS8c (rps8).